A 458-amino-acid polypeptide reads, in one-letter code: Tyrosine phenol-lyase (458 aa).

N6-(pyridoxal phosphate)lysine is present on Lys258.

Belongs to the beta-eliminating lyase family. Homotetramer. Requires pyridoxal 5'-phosphate as cofactor.

It catalyses the reaction L-tyrosine + H2O = phenol + pyruvate + NH4(+). The sequence is that of Tyrosine phenol-lyase (tpl) from Symbiobacterium thermophilum (strain DSM 24528 / JCM 14929 / IAM 14863 / T).